A 286-amino-acid chain; its full sequence is Expansin-like protein 1 (286 aa).

A signal peptide spans 1–21 (MKTFVLFVILLCLTFLSISKS). The Extracellular portion of the chain corresponds to 22–265 (ETCPFSQSLV…TGASIGTPSD (244 aa)). Residues 44 to 145 (AGNCGYENLM…YKVPCGVNGN (102 aa)) form the Expansin-like EG45 domain. 2 cysteine pairs are disulfide-bonded: Cys-47/Cys-77 and Cys-80/Cys-140. 2 N-linked (GlcNAc...) asparagine glycosylation sites follow: Asn-82 and Asn-89. Residues 266-286 (ASSLTLYALFSLTILFLVMLN) traverse the membrane as a helical segment.

This sequence belongs to the expansin family. Expansin A subfamily.

The protein localises to the membrane. May serve to lubricate the movement of the cellulose microfibrils during cell growth and wall extension and/or they may serve to maintain the fluid state of the slug cell wall. The sequence is that of Expansin-like protein 1 (expl1) from Dictyostelium discoideum (Social amoeba).